The following is a 338-amino-acid chain: NADPH dehydrogenase (338 aa).

22-25 (SPMC) lines the FMN pocket. Residue Tyr27 coordinates substrate. Residues Ala59 and Gln101 each contribute to the FMN site. 163-166 (HAAH) is a binding site for substrate. FMN contacts are provided by residues Arg214 and 306-307 (GR).

Belongs to the NADH:flavin oxidoreductase/NADH oxidase family. NamA subfamily. Homotetramer. The cofactor is FMN.

It carries out the reaction A + NADPH + H(+) = AH2 + NADP(+). Catalyzes the reduction of the double bond of an array of alpha,beta-unsaturated aldehydes and ketones. It also reduces the nitro group of nitroester and nitroaromatic compounds. It could have a role in detoxification processes. This Listeria monocytogenes serovar 1/2a (strain ATCC BAA-679 / EGD-e) protein is NADPH dehydrogenase.